Here is a 604-residue protein sequence, read N- to C-terminus: Prostaglandin G/H synthase 2 (604 aa).

The N-terminal stretch at 1–17 (MLARALLLCVALALGHA) is a signal peptide. Residues 18-55 (ANPCCSNPCQNRGVCMSVGFDQYQCDCTRTGFYGENCS) form the EGF-like domain. Disulfide bonds link Cys-21–Cys-32, Cys-22–Cys-145, Cys-26–Cys-42, and Cys-44–Cys-54. Asn-53 carries an N-linked (GlcNAc...) asparagine glycan. Arg-106 serves as a coordination point for substrate. An N-linked (GlcNAc...) asparagine glycan is attached at Asn-130. His-193 acts as the Proton acceptor in catalysis. Tyr-341 lines the substrate pocket. Tyr-371 (for cyclooxygenase activity) is an active-site residue. His-374 is a binding site for heme b. A glycan (N-linked (GlcNAc...) asparagine) is linked at Asn-396. Cys-526 carries the post-translational modification S-nitrosocysteine. Cysteines 555 and 561 form a disulfide. Asn-580 carries N-linked (GlcNAc...) asparagine glycosylation.

It belongs to the prostaglandin G/H synthase family. Homodimer. Heme b serves as cofactor. Post-translationally, S-nitrosylation by NOS2 (iNOS) activates enzyme activity. S-nitrosylation may take place on different Cys residues in addition to Cys-526.

Its subcellular location is the microsome membrane. The protein resides in the endoplasmic reticulum membrane. The protein localises to the nucleus inner membrane. It localises to the nucleus outer membrane. It carries out the reaction (5Z,8Z,11Z,14Z)-eicosatetraenoate + AH2 + 2 O2 = prostaglandin H2 + A + H2O. The enzyme catalyses (5Z,8Z,11Z,14Z)-eicosatetraenoate + 2 O2 = prostaglandin G2. It catalyses the reaction prostaglandin G2 + AH2 = prostaglandin H2 + A + H2O. The catalysed reaction is (5Z,8Z,11Z,14Z,17Z)-eicosapentaenoate + 2 O2 = prostaglandin G3. It carries out the reaction prostaglandin G3 + AH2 = prostaglandin H3 + A + H2O. The enzyme catalyses (8Z,11Z,14Z)-eicosatrienoate + 2 O2 = prostaglandin G1. It catalyses the reaction prostaglandin G1 + AH2 = prostaglandin H1 + A + H2O. The catalysed reaction is 2-(5Z,8Z,11Z,14Z)-eicosatetraenoyl-sn-glycero-3-phosphoethanolamine + 2 O2 = 2-(prostaglandin G2)-sn-glycero-3-phosphoethanolamine. It carries out the reaction 2-(prostaglandin G2)-sn-glycero-3-phosphoethanolamine + AH2 = 2-(prostaglandin H2)-sn-glycero-3-phosphoethanolamine + A + H2O. The enzyme catalyses 2-(5Z,8Z,11Z,14Z)-eicosatetraenoyl-sn-glycero-3-phosphocholine + 2 O2 = 2-(prostaglandin G2)-sn-glycero-3-phosphocholine. It catalyses the reaction 2-(prostaglandin G2)-sn-glycero-3-phosphocholine + AH2 = 2-(prostaglandin H2)-sn-glycero-3-phosphocholine + A + H2O. The catalysed reaction is (15S)-hydroperoxy-(5Z,8Z,11Z,13E)-eicosatetraenoate + AH2 = (15S)-hydroxy-(5Z,8Z,11Z,13E)-eicosatetraenoate + A + H2O. It carries out the reaction 2-(5Z,8Z,11Z,14Z)-eicosatetraenoyl-sn-glycero-3-phosphocholine + AH2 + O2 = 2-[(15S)-hydroxy-(5Z,8Z,11Z,13E)-eicosatetraenoyl]-sn-glycero-3-phosphocholine + A + H2O. The enzyme catalyses 2-(5Z,8Z,11Z,14Z)-eicosatetraenoyl-sn-glycero-3-phosphocholine + AH2 + O2 = 2-[(15R)-hydroxy-(5Z,8Z,11Z,13E)-eicosatetraenoyl]-sn-glycero-3-phosphocholine + A + H2O. It catalyses the reaction 2-(5Z,8Z,11Z,14Z)-eicosatetraenoyl-sn-glycero-3-phosphocholine + AH2 + O2 = 2-[(11R)-hydroxy-(5Z,8Z,12E,14Z)-eicosatetraenoyl]-sn-glycero-3-phosphocholine + A + H2O. The catalysed reaction is (9Z,12Z)-octadecadienoate + AH2 + O2 = 9-hydroxy-(10E,12Z)-octadecadienoate + A + H2O. It carries out the reaction (9Z,12Z)-octadecadienoate + AH2 + O2 = 13-hydroxy-(9Z,11E)-octadecadienoate + A + H2O. The enzyme catalyses (5Z,8Z,11Z,14Z)-eicosatetraenoate + AH2 + O2 = (15R)-hydroxy-(5Z,8Z,11Z,13E)-eicosatetraenoate + A + H2O. It catalyses the reaction (5Z,8Z,11Z,14Z)-eicosatetraenoate + AH2 + O2 = (11R)-hydroxy-(5Z,8Z,12E,14Z)-eicosatetraenoate + A + H2O. The catalysed reaction is (5Z,8Z,11Z,14Z,17Z)-eicosapentaenoate + AH2 + O2 = (11R)-hydroxy-(5Z,8Z,12E,14Z,17Z)-eicosapentaenoate + A + H2O. It carries out the reaction (5Z,8Z,11Z,14Z,17Z)-eicosapentaenoate + AH2 + O2 = (18S)-hydroxy-(5Z,8Z,11Z,14Z,16E)-eicosapentaenoate + A + H2O. The enzyme catalyses (5Z,8Z,11Z,14Z,17Z)-eicosapentaenoate + AH2 + O2 = (18R)-hydroxy-(5Z,8Z,11Z,14Z,16E)-eicosapentaenoate + A + H2O. It catalyses the reaction (5Z,8Z,11Z,14Z,17Z)-eicosapentaenoate + AH2 + O2 = (15R)-hydroxy-(5Z,8Z,11Z,13E,17Z)-eicosapentaenoate + A + H2O. The catalysed reaction is (5Z,8Z,11Z,14Z,17Z)-eicosapentaenoate + AH2 + O2 = (15S)-hydroxy-(5Z,8Z,11Z,13E,17Z)-eicosapentaenoate + A + H2O. It carries out the reaction (7Z,10Z,13Z,16Z,19Z)-docosapentaenoate + AH2 + O2 = 13R-hydroxy-(7Z,10Z,14E,16Z,19Z)-docosapentaenoate + A + H2O. The enzyme catalyses (4Z,7Z,10Z,13Z,16Z,19Z)-docosahexaenoate + AH2 + O2 = 13-hydroxy-(4Z,7Z,10Z,14E,16Z,19Z)-docosahexaenoate + A + H2O. It catalyses the reaction (5S)-hydroxy-(6E,8Z,11Z,14Z)-eicosatetraenoate + AH2 + O2 = (5S,15R)-dihydroxy-(6E,8Z,11Z,13E)-eicosatetraenoate + A + H2O. The catalysed reaction is (4Z,7Z,10Z,13Z,16Z,19Z)-docosahexaenoate + AH2 + O2 = 17R-hydroxy-(4Z,7Z,10Z,13Z,15E,19Z)-docosahexaenoate + A + H2O. It carries out the reaction (5S)-hydroxy-(6E,8Z,11Z,14Z)-eicosatetraenoate + AH2 + O2 = (5S,15S)-dihydroxy-(6E,8Z,11Z,13E)-eicosatetraenoate + A + H2O. The enzyme catalyses (5S)-hydroxy-(6E,8Z,11Z,14Z)-eicosatetraenoate + AH2 + O2 = (5S,11R)-dihydroxy-(6E,8Z,12E,14Z)-eicosatetraenoate + A + H2O. It catalyses the reaction 2-(5Z,8Z,11Z,14Z-eicosatetraenoyl)-glycerol + 2 O2 = 2-glyceryl-prostaglandin G2. The catalysed reaction is 2-glyceryl-prostaglandin G2 + AH2 = 2-glyceryl-prostaglandin H2 + A + H2O. It carries out the reaction (5Z,8Z,11Z,14Z)-eicosatetraenoate + O2 = (15R)-hydroperoxy-(5Z,8Z,11Z,13E)-eicosatetraenoate. The enzyme catalyses (5Z,8Z,11Z,14Z)-eicosatetraenoate + O2 = 11R-hydroperoxy-(5Z,8Z,12E,14Z)-eicosatetraenoate. It catalyses the reaction (9Z,12Z)-octadecadienoate + AH2 + O2 = (9R)-hydroxy-(10E,12Z)-octadecadienoate + A + H2O. The catalysed reaction is (9Z,12Z)-octadecadienoate + AH2 + O2 = (9S)-hydroxy-(10E,12Z)-octadecadienoate + A + H2O. It carries out the reaction (9Z,12Z)-octadecadienoate + AH2 + O2 = (13S)-hydroxy-(9Z,11E)-octadecadienoate + A + H2O. The enzyme catalyses (9Z,12Z)-octadecadienoate + AH2 + O2 = (13R)-hydroxy-(9Z,11E)-octadecadienoate + A + H2O. The protein operates within lipid metabolism; prostaglandin biosynthesis. Its function is as follows. Dual cyclooxygenase and peroxidase in the biosynthesis pathway of prostanoids, a class of C20 oxylipins mainly derived from arachidonate ((5Z,8Z,11Z,14Z)-eicosatetraenoate, AA, C20:4(n-6)), with a particular role in the inflammatory response. The cyclooxygenase activity oxygenates AA to the hydroperoxy endoperoxide prostaglandin G2 (PGG2), and the peroxidase activity reduces PGG2 to the hydroxy endoperoxide prostaglandin H2 (PGH2), the precursor of all 2-series prostaglandins and thromboxanes. This complex transformation is initiated by abstraction of hydrogen at carbon 13 (with S-stereochemistry), followed by insertion of molecular O2 to form the endoperoxide bridge between carbon 9 and 11 that defines prostaglandins. The insertion of a second molecule of O2 (bis-oxygenase activity) yields a hydroperoxy group in PGG2 that is then reduced to PGH2 by two electrons. Similarly catalyzes successive cyclooxygenation and peroxidation of dihomo-gamma-linoleate (DGLA, C20:3(n-6)) and eicosapentaenoate (EPA, C20:5(n-3)) to corresponding PGH1 and PGH3, the precursors of 1- and 3-series prostaglandins. In an alternative pathway of prostanoid biosynthesis, converts 2-arachidonoyl lysophopholipids to prostanoid lysophopholipids, which are then hydrolyzed by intracellular phospholipases to release free prostanoids. Metabolizes 2-arachidonoyl glycerol yielding the glyceryl ester of PGH2, a process that can contribute to pain response. Generates lipid mediators from n-3 and n-6 polyunsaturated fatty acids (PUFAs) via a lipoxygenase-type mechanism. Oxygenates PUFAs to hydroperoxy compounds and then reduces them to corresponding alcohols. Plays a role in the generation of resolution phase interaction products (resolvins) during both sterile and infectious inflammation. Metabolizes docosahexaenoate (DHA, C22:6(n-3)) to 17R-HDHA, a precursor of the D-series resolvins (RvDs). As a component of the biosynthetic pathway of E-series resolvins (RvEs), converts eicosapentaenoate (EPA, C20:5(n-3)) primarily to 18S-HEPE that is further metabolized by ALOX5 and LTA4H to generate 18S-RvE1 and 18S-RvE2. In vascular endothelial cells, converts docosapentaenoate (DPA, C22:5(n-3)) to 13R-HDPA, a precursor for 13-series resolvins (RvTs) shown to activate macrophage phagocytosis during bacterial infection. In activated leukocytes, contributes to oxygenation of hydroxyeicosatetraenoates (HETE) to diHETES (5,15-diHETE and 5,11-diHETE). Can also use linoleate (LA, (9Z,12Z)-octadecadienoate, C18:2(n-6)) as substrate and produce hydroxyoctadecadienoates (HODEs) in a regio- and stereospecific manner, being (9R)-HODE ((9R)-hydroxy-(10E,12Z)-octadecadienoate) and (13S)-HODE ((13S)-hydroxy-(9Z,11E)-octadecadienoate) its major products. During neuroinflammation, plays a role in neuronal secretion of specialized preresolving mediators (SPMs) 15R-lipoxin A4 that regulates phagocytic microglia. The sequence is that of Prostaglandin G/H synthase 2 (PTGS2) from Equus caballus (Horse).